Consider the following 233-residue polypeptide: Large ribosomal subunit protein uL1 (233 aa).

This sequence belongs to the universal ribosomal protein uL1 family. In terms of assembly, part of the 50S ribosomal subunit.

In terms of biological role, binds directly to 23S rRNA. The L1 stalk is quite mobile in the ribosome, and is involved in E site tRNA release. Functionally, protein L1 is also a translational repressor protein, it controls the translation of the L11 operon by binding to its mRNA. This chain is Large ribosomal subunit protein uL1, found in Trichlorobacter lovleyi (strain ATCC BAA-1151 / DSM 17278 / SZ) (Geobacter lovleyi).